The following is a 399-amino-acid chain: Interferon regulatory factor 9 (399 aa).

Positions 9 to 116 (TRKLRSWIVE…EPYKVYRILP (108 aa)) form a DNA-binding region, IRF tryptophan pentad repeat. Residues 118-189 (GTLPNQPRNQ…CNSELEEGAG (72 aa)) are disordered. Residues 120 to 129 (LPNQPRNQKS) are compositionally biased toward polar residues. A Phosphoserine modification is found at Ser-139. Positions 148 to 157 (NGRTNGVVNH) are enriched in polar residues. Residues 171–189 (SNRSDSNSNCNSELEEGAG) show a composition bias toward low complexity. Residue Ser-393 is modified to Phosphoserine.

This sequence belongs to the IRF family. In terms of assembly, interacts with STAT2 in the cytoplasm. Forms the interferon-stimulated gene factor 3 complex (ISGF3) with the heterodimer STAT1:STAT2; upon stimulation.

It localises to the nucleus. Its function is as follows. Transcription factor that plays an essential role in anti-viral immunity. It mediates signaling by type I IFNs (IFN-alpha and IFN-beta). Following type I IFN binding to cell surface receptors, Jak kinases (TYK2 and JAK1) are activated, leading to tyrosine phosphorylation of STAT1 and STAT2. IRF9/ISGF3G associates with the phosphorylated STAT1:STAT2 dimer to form a complex termed ISGF3 transcription factor, that enters the nucleus. ISGF3 binds to the IFN stimulated response element (ISRE) to activate the transcription of interferon stimulated genes, which drive the cell in an antiviral state. This is Interferon regulatory factor 9 (Irf9) from Mus musculus (Mouse).